The primary structure comprises 390 residues: EF-hand calcium-binding domain-containing protein 4A (390 aa).

Low complexity predominate over residues 1–27; sequence MSPRSTLRSPLPSRTARSSASSDTPSP. The segment at 1–37 is disordered; the sequence is MSPRSTLRSPLPSRTARSSASSDTPSPGADRQDRMSK. EF-hand domains are found at residues 33–66 and 67–102; these read DRMSKAKELFVLCDKEGKGFITKRDMQRLQQELP and LSPEQLESVFESLDRDRNGYLTPLEFHTGLGELVGS. Residues Asp-80, Asp-82, Asn-84, Tyr-86, and Glu-91 each coordinate Ca(2+). Residues 173–357 adopt a coiled-coil conformation; that stretch reads SHLQDALKEK…DDKDAHQAQK (185 aa). Residues 206–234 form a disordered region; it reads DMESQLKEERERRQALDSMRQGDKKEQLL.

Belongs to the EFCAB4 family.

This chain is EF-hand calcium-binding domain-containing protein 4A (cracr2b), found in Danio rerio (Zebrafish).